A 133-amino-acid chain; its full sequence is Thioredoxin H2 (133 aa).

The interval Met1–Ser22 is disordered. A Thioredoxin domain is found at Ser6–Ala133. Residues Cys59 and Cys62 each act as nucleophile in the active site. Cysteines 59 and 62 form a disulfide.

Belongs to the thioredoxin family. Plant H-type subfamily. In terms of assembly, interacts with MDH1.

The protein localises to the cytoplasm. It localises to the mitochondrion. Functionally, thiol-disulfide oxidoreductase probably involved in the redox regulation of a number of cytosolic enzymes. Possesses insulin disulfide bonds reducing activity. This Arabidopsis thaliana (Mouse-ear cress) protein is Thioredoxin H2 (TRX2).